The primary structure comprises 1461 residues: MSESESDYFTDGSEDDFVPTSKKSTKKNASSKSKQPLGDATNSTVSSSRSSTPKPTNASETYQKLSQLEHILKRPDTYIGSVEKTKTEMWCFDAETESMVFKEVTIVPGLYKIFDEILVNAADNKIRDPSMKNIRVKIDAENNIIEVMNDGKGIPIEMHTKENMYIPELIFGNLLTSSNYDDDQKKVTGGRNGFGAKLCNIFSTQFEVETADLNMGKLYKQSWTNNMSNVSKPKITTLRTKKEYTKITFRPDLSKFDMDCLDNDLLSVLRRRVYDLCGTVKNCNIYLNDKRLNISSFKGYVEMYVKAIKERSPEPEPQDGTIKNFTTIVHEVFNDRWEVAFAVSDGSFNQVSFVNSIATTSGGTHVKYVSDQIINKLVETLSKKEKGKKKLMIKPQEVRDNMFLFINCLIENPAFTSQTKEQLTTKVSQFGGKDKFVANDNLINRILKTSIVDKIRAIANANEDKALQKADGSRKSRIKGQVNLVDANKAGTKDGHNCTLILTEGLSAMNLAVAGLSVVGRDYYGCFPLRGKLLNVREASADQISKNAEINSLKQIIGLQHKKVYTAENIKSLRYGHIMIMTDQDQDGSHIKGLIINFLETSFPGLLDIPGFLLEFITPIVKVTVKARGAGGKRVIPFYTMPEFEHWRDTEGKQCRWTQKYYKGLGTSTPMEAREYFTALDRHLKRFHALQGEDKDYIDLAFSKKKADERKEWLQGFLPGTHLDPEITEIPISDFINKEFILFSMSDNVRSIPSVLDGFKPGQRKVLYGCFKKKLRSEIKVAQLAGYVSENTGYHHGEQSLVQTIIGLAQNFVGSNNINVLKPNGSFGSRAAGGKDFSAARYIFTELSEITRKIFNPLDDPLYTYVQDDEQTVEPEWYLPVLPMILVNGAEGIGTGWSTNIPSYNPKDLVTNIRRLMNGEELQEMTPWYKGWGGDLEPMGPQKFKVSGRIEQIDSNTVEITEIPVKTWTNNVKEFLLSGFGNEKTQPWIKDMEEHHTTSIRFVVKLTDAEMQKSLRIGLLERFKLVSSLSLANMVAFDPMGRIKKYNDVLEIIKDFYYVRLEYYQKRKDYMTDNLQNQLLMLSEQARFIKMIIEKQLSVANKKKKQLVALLEEHNFTKFSKDGKPIKSSEELLTGDDADEEEETQEQEGDEDVGNTSVANIQEGEPEQAAHVPETIYSSYDYLLGMAIWSLTYERFMRIMQQRDQKEAELNALLSKSAKDLWNQDLDEFLAEFDKFLLRDEQERESLASNGKKKSTKRRAKATATKDQPNNKKVKVEPKEKKSTSAKPIVKKEASNEPQASSSSKPKEKDDILSFFSSSSSSAKKTTKPSGRATSNKEIETITLFSDDDDDEDIFNLNSSSSTKVKKEAKSRSATPAAEKSKKSKSSGKQSILDELEDLEILGNFDKPEPKERRTRETASTTKRNTKKKPVIIDSDDEDEDEEDDIVMSDGDDDDDFIVDE.

A compositionally biased stretch (acidic residues) spans 1-17; the sequence is MSESESDYFTDGSEDDF. A disordered region spans residues 1–61; it reads MSESESDYFT…TPKPTNASET (61 aa). Positions 41-52 are enriched in low complexity; sequence TNSTVSSSRSST. Residues Asn120, Asn149, 177–179, and 190–197 each bind ATP; these read SSN and GRNGFGAK. The interval 382–389 is interaction with DNA; that stretch reads SKKEKGKK. 418–420 serves as a coordination point for ATP; it reads QTK. The 117-residue stretch at 498–614 folds into the Toprim domain; it reads CTLILTEGLS…GLLDIPGFLL (117 aa). Mg(2+)-binding residues include Glu504, Asp583, and Asp585. Residues 752-1226 form the Topo IIA-type catalytic domain; sequence IPSVLDGFKP…SAKDLWNQDL (475 aa). Tyr842 acts as the O-(5'-phospho-DNA)-tyrosine intermediate in catalysis. The tract at residues 1024–1033 is interaction with DNA; that stretch reads KLVSSLSLAN. Disordered regions lie at residues 1122-1155 and 1244-1461; these read DGKPIKSSEELLTGDDADEEEETQEQEGDEDVGN and RESL…IVDE. The span at 1133–1153 shows a compositional bias: acidic residues; the sequence is LTGDDADEEEETQEQEGDEDV. Basic residues predominate over residues 1251-1261; that stretch reads GKKKSTKRRAK. 2 stretches are compositionally biased toward basic and acidic residues: residues 1274–1283 and 1406–1417; these read VKVEPKEKKS and DKPEPKERRTRE. Residues 1434 to 1461 are compositionally biased toward acidic residues; sequence DSDDEDEDEEDDIVMSDGDDDDDFIVDE.

This sequence belongs to the type II topoisomerase family. As to quaternary structure, homodimer. It depends on Mg(2+) as a cofactor. Mn(2+) is required as a cofactor. Ca(2+) serves as cofactor.

It localises to the nucleus. The enzyme catalyses ATP-dependent breakage, passage and rejoining of double-stranded DNA.. In terms of biological role, control of topological states of DNA by transient breakage and subsequent rejoining of DNA strands. Topoisomerase II makes double-strand breaks. In Candida albicans (Yeast), this protein is DNA topoisomerase 2 (TOP2).